The primary structure comprises 146 residues: Leghemoglobin 49 (146 aa).

The region spanning 2 to 146 is the Globin domain; that stretch reads GFTQQQEALV…LATAIKKAMS (145 aa). A nitrated tyrosine mark is found at tyrosine 24 and tyrosine 29. Position 44 (serine 44) interacts with heme b. Serine 44 bears the Phosphoserine mark. Histidine 61 provides a ligand contact to O2. Residues histidine 93 and lysine 96 each coordinate heme b. Tyrosine 134 carries the post-translational modification Nitrated tyrosine.

This sequence belongs to the plant globin family. Monomer. In terms of processing, nitrated in effective nodules and particularly in hypoxic conditions; this mechanism may play a protective role in the symbiosis by buffering toxic peroxynitrite NO(2)(-). Nitration level decrease during nodule senescence. Phosphorylation at Ser-44 disrupts the molecular environment of its porphyrin ring oxygen binding pocket, thus leading to a reduced oxygen consumption and to the delivery of oxygen O(2) to symbiosomes. As to expression, accumulates in root nodules after inoculation by bacteria of the genus Rhizobium.

It localises to the cytoplasm. It is found in the cytosol. Its subcellular location is the nucleus. Leghemoglobin that reversibly binds oxygen O(2) through a pentacoordinated heme iron. In root nodules, facilitates the diffusion of oxygen to the bacteroids while preventing the bacterial nitrogenase from being inactivated by buffering dioxygen, nitric oxide and carbon monoxide, and promoting the formation of reactive oxygen species (ROS, e.g. H(2)O(2)). This role is essential for symbiotic nitrogen fixation (SNF). In Vicia faba (Broad bean), this protein is Leghemoglobin 49.